Consider the following 384-residue polypeptide: S-adenosylmethionine synthase (384 aa).

An ATP-binding site is contributed by His15. Residue Asp17 coordinates Mg(2+). Position 43 (Glu43) interacts with K(+). Residues Glu56 and Gln99 each contribute to the L-methionine site. Residues 99 to 109 (QSPDINQGVDR) form a flexible loop region. ATP is bound by residues 164–166 (DAK), 230–231 (RF), Asp239, 245–246 (RK), Ala262, and Lys266. L-methionine is bound at residue Asp239. L-methionine is bound at residue Lys270.

The protein belongs to the AdoMet synthase family. As to quaternary structure, homotetramer; dimer of dimers. The cofactor is Mg(2+). K(+) is required as a cofactor.

It is found in the cytoplasm. It carries out the reaction L-methionine + ATP + H2O = S-adenosyl-L-methionine + phosphate + diphosphate. Its pathway is amino-acid biosynthesis; S-adenosyl-L-methionine biosynthesis; S-adenosyl-L-methionine from L-methionine: step 1/1. Catalyzes the formation of S-adenosylmethionine (AdoMet) from methionine and ATP. The overall synthetic reaction is composed of two sequential steps, AdoMet formation and the subsequent tripolyphosphate hydrolysis which occurs prior to release of AdoMet from the enzyme. The polypeptide is S-adenosylmethionine synthase (Klebsiella pneumoniae (strain 342)).